Consider the following 334-residue polypeptide: Serine/threonine-protein kinase (334 aa).

The Protein kinase domain maps to 53-333 (FEVLQPLQSG…DEILNFGMWT (281 aa)). ATP-binding positions include 59–67 (LQSGSEGRV) and lysine 82. Aspartate 167 (proton acceptor) is an active-site residue.

Belongs to the protein kinase superfamily. Ser/Thr protein kinase family.

The catalysed reaction is L-seryl-[protein] + ATP = O-phospho-L-seryl-[protein] + ADP + H(+). It carries out the reaction L-threonyl-[protein] + ATP = O-phospho-L-threonyl-[protein] + ADP + H(+). Functionally, able to phosphorylate in vitro the major virion phosphoprotein phosphorylated in vivo. This Sus scrofa (Pig) protein is Serine/threonine-protein kinase (PK).